The primary structure comprises 361 residues: uncharacterized protein (361 aa).

WD repeat units lie at residues 57 to 96 (RHKK…VSSK), 103 to 142 (KEIS…GIIH), 146 to 184 (DHID…KPIL), 187 to 229 (EQDE…DHTD), 237 to 275 (SHDF…YERI), and 280 to 318 (SSRS…GDES). A disordered region spans residues 311–361 (DQKEGDESSSSDNLDSDEDSSSDSEFSSPKKKKKVGNQGKKPLGTDFFDGL).

Its subcellular location is the nucleus. The protein resides in the nucleolus. This is an uncharacterized protein from Schizosaccharomyces pombe (strain 972 / ATCC 24843) (Fission yeast).